We begin with the raw amino-acid sequence, 547 residues long: Chaperonin GroEL (547 aa).

ATP-binding positions include 30–33 (TLGP), Lys51, 87–91 (DGTTT), Gly415, and Asp496. A disordered region spans residues 527-547 (SDKAEPMPMRGGMGGMGGMDF). Residues 537–547 (GGMGGMGGMDF) are compositionally biased toward gly residues.

The protein belongs to the chaperonin (HSP60) family. In terms of assembly, forms a cylinder of 14 subunits composed of two heptameric rings stacked back-to-back. Interacts with the co-chaperonin GroES.

Its subcellular location is the cytoplasm. The catalysed reaction is ATP + H2O + a folded polypeptide = ADP + phosphate + an unfolded polypeptide.. Its function is as follows. Together with its co-chaperonin GroES, plays an essential role in assisting protein folding. The GroEL-GroES system forms a nano-cage that allows encapsulation of the non-native substrate proteins and provides a physical environment optimized to promote and accelerate protein folding. The polypeptide is Chaperonin GroEL (Rickettsia africae (strain ESF-5)).